Consider the following 349-residue polypeptide: Leukotriene B4 receptor 1 (349 aa).

Residues 1–19 (MNTTSPAAPSSSGVSFISL) lie on the Extracellular side of the membrane. An N-linked (GlcNAc...) asparagine glycan is attached at Asn-2. The chain crosses the membrane as a helical span at residues 20–42 (LVIIVLSVALAVGLPGNSFVVWS). Residues 43–54 (ILAKLRKRSVTA) are Cytoplasmic-facing. A helical membrane pass occupies residues 55 to 75 (LMVLHLALADLAVLLTAPFFL). The Extracellular portion of the chain corresponds to 76–91 (YSVAQGTWTFGLSSCR). A helical membrane pass occupies residues 92–113 (LFHYVCGVSMYASVLLIMTMSL). Residues 114–138 (DRSLAVALPFVSQKLRTKAVAWRVL) are Cytoplasmic-facing. A helical membrane pass occupies residues 139 to 159 (AGIWVMSVLLATPVLLYRTVH). The Extracellular segment spans residues 160–179 (LGLNNRSLTCFLKYPSERHR). An N-linked (GlcNAc...) asparagine glycan is attached at Asn-164. A helical transmembrane segment spans residues 180–200 (AFHLFFEVITGFLLPFLVVVA). The Cytoplasmic segment spans residues 201 to 222 (SYCDIGRRLRARRFRRSRRTGR). Residues 223–243 (LVALIILAFAAFWLPYHVVNL) form a helical membrane-spanning segment. The Extracellular segment spans residues 244-269 (AEGFRAAAGKALGSGPVGRRLLLARH). A helical transmembrane segment spans residues 270 to 290 (VLITLAFLSSSVNPLLYACAG). Residues 291 to 349 (GGLLRSAGVGFIAKLLEGTGSETSSSRRKGTLAQTLRGTPASPEPDPAESLTASTNPLE) lie on the Cytoplasmic side of the membrane. The interval 311-349 (SETSSSRRKGTLAQTLRGTPASPEPDPAESLTASTNPLE) is disordered.

Belongs to the G-protein coupled receptor 1 family. In terms of processing, phosphorylated by GRK6 upon leukotriene B4 binding; which promotes desensitization.

It localises to the cell membrane. In terms of biological role, receptor for extracellular ATP &gt; UTP and ADP. The activity of this receptor is mediated by G proteins which activate a phosphatidylinositol-calcium second messenger system. May be the cardiac P2Y receptor involved in the regulation of cardiac muscle contraction through modulation of L-type calcium currents. Is a receptor for leukotriene B4, a potent chemoattractant involved in inflammation and immune response. The protein is Leukotriene B4 receptor 1 (LTB4R) of Bos taurus (Bovine).